Reading from the N-terminus, the 270-residue chain is tRNA pseudouridine synthase A (270 aa).

The Nucleophile role is filled by D51. Residue Y109 participates in substrate binding.

The protein belongs to the tRNA pseudouridine synthase TruA family. In terms of assembly, homodimer.

The enzyme catalyses uridine(38/39/40) in tRNA = pseudouridine(38/39/40) in tRNA. Formation of pseudouridine at positions 38, 39 and 40 in the anticodon stem and loop of transfer RNAs. The sequence is that of tRNA pseudouridine synthase A from Burkholderia multivorans (strain ATCC 17616 / 249).